An 89-amino-acid chain; its full sequence is Small ribosomal subunit protein uS15 (89 aa).

Positions 1 to 22 are disordered; that stretch reads MALEKEEKSQIINNYQLHETDT. A compositionally biased stretch (polar residues) spans 10–22; sequence QIINNYQLHETDT.

It belongs to the universal ribosomal protein uS15 family. Part of the 30S ribosomal subunit. Forms a bridge to the 50S subunit in the 70S ribosome, contacting the 23S rRNA.

In terms of biological role, one of the primary rRNA binding proteins, it binds directly to 16S rRNA where it helps nucleate assembly of the platform of the 30S subunit by binding and bridging several RNA helices of the 16S rRNA. Forms an intersubunit bridge (bridge B4) with the 23S rRNA of the 50S subunit in the ribosome. In Chloroflexus aggregans (strain MD-66 / DSM 9485), this protein is Small ribosomal subunit protein uS15.